A 312-amino-acid polypeptide reads, in one-letter code: Coiled-coil domain-containing protein 160 homolog (312 aa).

Positions 126–281 (SEGAKFKNQL…EERKREKTHS (156 aa)) form a coiled coil.

Belongs to the CCDC160 family.

In Xenopus tropicalis (Western clawed frog), this protein is Coiled-coil domain-containing protein 160 homolog.